A 1020-amino-acid chain; its full sequence is C2 and GRAM domain-containing protein At1g03370 (1020 aa).

A C2 1 domain is found at 1-102 (MKLQVRVVEA…ENQSLGTVWY (102 aa)). Ca(2+)-binding residues include Asp-17, Asp-23, Asp-69, Asp-71, and Asp-77. 2 stretches are compositionally biased toward polar residues: residues 134–144 (TSSGDQTSASR) and 158–172 (TCAS…SSIP). The disordered stretch occupies residues 134–172 (TSSGDQTSASRSPDLRLESPIDPSTCASPSRSDDASSIP). The region spanning 249–421 (SGGVVVDQLF…LLAQSVKPVD (173 aa)) is the VASt 1 domain. Residues 454 to 474 (FTVLSTFLIGIYVFVHIVFAI) form a helical membrane-spanning segment. One can recognise a C2 2 domain in the interval 517-635 (QARKQKGSDH…NISDLADVWV (119 aa)). 5 residues coordinate Ca(2+): Asp-551, Asp-557, Asp-604, Phe-605, and Asp-606. Residues 689–752 (AFQKLFGLPQ…LWEDIEEIQV (64 aa)) form the GRAM domain. Residues 848–1010 (RFSEVFSLTL…MTFGFLEKEY (163 aa)) form the VASt 2 domain.

Ca(2+) is required as a cofactor.

The protein localises to the membrane. In Arabidopsis thaliana (Mouse-ear cress), this protein is C2 and GRAM domain-containing protein At1g03370.